The chain runs to 329 residues: Beta-ketoacyl-[acyl-carrier-protein] synthase III (329 aa).

Catalysis depends on residues Cys114 and His255. The tract at residues 256–260 (QANQR) is ACP-binding. Residue Asn285 is part of the active site.

Belongs to the thiolase-like superfamily. FabH family. As to quaternary structure, homodimer.

The protein resides in the cytoplasm. It catalyses the reaction malonyl-[ACP] + acetyl-CoA + H(+) = 3-oxobutanoyl-[ACP] + CO2 + CoA. The protein operates within lipid metabolism; fatty acid biosynthesis. In terms of biological role, catalyzes the condensation reaction of fatty acid synthesis by the addition to an acyl acceptor of two carbons from malonyl-ACP. Catalyzes the first condensation reaction which initiates fatty acid synthesis and may therefore play a role in governing the total rate of fatty acid production. Possesses both acetoacetyl-ACP synthase and acetyl transacylase activities. Its substrate specificity determines the biosynthesis of branched-chain and/or straight-chain of fatty acids. The polypeptide is Beta-ketoacyl-[acyl-carrier-protein] synthase III (Trichodesmium erythraeum (strain IMS101)).